We begin with the raw amino-acid sequence, 762 residues long: 5-methyltetrahydropteroyltriglutamate--homocysteine methyltransferase (762 aa).

Residues 17–20 (REWK) and K111 each bind 5-methyltetrahydropteroyltri-L-glutamate. L-homocysteine is bound by residues 435-437 (IGS) and E488. Residues 435–437 (IGS) and E488 contribute to the L-methionine site. Residues 519-520 (RC) and W565 each bind 5-methyltetrahydropteroyltri-L-glutamate. Position 603 (D603) interacts with L-homocysteine. Position 603 (D603) interacts with L-methionine. E609 is a 5-methyltetrahydropteroyltri-L-glutamate binding site. The Zn(2+) site is built by H645, C647, and E669. Catalysis depends on H698, which acts as the Proton donor. C730 provides a ligand contact to Zn(2+).

The protein belongs to the vitamin-B12 independent methionine synthase family. It depends on Zn(2+) as a cofactor.

It carries out the reaction 5-methyltetrahydropteroyltri-L-glutamate + L-homocysteine = tetrahydropteroyltri-L-glutamate + L-methionine. The protein operates within amino-acid biosynthesis; L-methionine biosynthesis via de novo pathway; L-methionine from L-homocysteine (MetE route): step 1/1. Catalyzes the transfer of a methyl group from 5-methyltetrahydrofolate to homocysteine resulting in methionine formation. The sequence is that of 5-methyltetrahydropteroyltriglutamate--homocysteine methyltransferase from Bacillus cereus (strain AH820).